We begin with the raw amino-acid sequence, 568 residues long: Protein KATNIP homolog (568 aa).

Positions 1 to 20 are enriched in basic and acidic residues; the sequence is MSDSDLKEIEKNAENIKLEP. The tract at residues 1 to 30 is disordered; the sequence is MSDSDLKEIEKNAENIKLEPAEDEVNEEDQ. The segment covering 21–30 has biased composition (acidic residues); the sequence is AEDEVNEEDQ.

In terms of tissue distribution, expressed in most ciliated neuronal cells. Not expressed in non-ciliated cells.

It localises to the cytoplasm. The protein resides in the cytoskeleton. Its subcellular location is the cilium axoneme. It is found in the cilium basal body. In terms of biological role, may regulate ciliary A-tubule number and, along with arl-13, controls cilium integrity. The chain is Protein KATNIP homolog from Caenorhabditis elegans.